Consider the following 118-residue polypeptide: Thioredoxin H3 (118 aa).

Alanine 2 carries the N-acetylalanine modification. Residues 2–113 enclose the Thioredoxin domain; that stretch reads AAEGEVIACH…IIANLEKHKT (112 aa). Residues cysteine 39 and cysteine 42 each act as nucleophile in the active site. A disulfide bridge links cysteine 39 with cysteine 42.

Belongs to the thioredoxin family. Plant H-type subfamily. Interacts with FBA5 and FBA8. Interacts with FBA6. Interacts with MDH1.

Its subcellular location is the cytoplasm. Thiol-disulfide oxidoreductase that possesses disulfide reductase and insulin disulfide bonds reducing activities. Heat shock causes oligomerization and formation of high molecular weight (HMW) complexes with concomitant functional switching from a disulfide reductase to chaperone. The polypeptide is Thioredoxin H3 (TRX3) (Arabidopsis thaliana (Mouse-ear cress)).